The primary structure comprises 88 residues: Beta-insect excitatory toxin 2 (88 aa).

A signal peptide spans 1 to 18 (MKFLLLFLVVLPIMGVLG). The 64-residue stretch at 20–83 (KNGYAVDSSG…ISDTRKSYCD (64 aa)) folds into the LCN-type CS-alpha/beta domain. Intrachain disulfides connect Cys-34/Cys-55, Cys-40/Cys-60, Cys-44/Cys-62, and Cys-56/Cys-82.

It belongs to the long (4 C-C) scorpion toxin superfamily. Sodium channel inhibitor family. Beta subfamily. Expressed by the venom gland.

The protein localises to the secreted. In terms of biological role, excitatory insect beta-toxins induce a spastic paralysis. They bind voltage-independently at site-4 of sodium channels (Nav) and shift the voltage of activation toward more negative potentials thereby affecting sodium channel activation and promoting spontaneous and repetitive firing. This toxin is active only on insects. The protein is Beta-insect excitatory toxin 2 of Androctonus australis (Sahara scorpion).